Reading from the N-terminus, the 186-residue chain is PRKR-interacting protein 1 (186 aa).

The segment at 1-50 (MASSAASSVRPPRPKKEPQALIIPKNAAEEQKLKLERLMKNPDKAVPIPE) is interaction with EIF2AK2. Disordered stretches follow at residues 39–61 (MKNP…RPPP) and 119–186 (AAEE…ITGR). The interval 51–143 (KMSEWAPRPP…LKEKKLLAKK (93 aa)) is required for RNA-binding. Residues 86–153 (RRREYQRQDY…MKLEQKKQSE (68 aa)) adopt a coiled-coil conformation. A required for nuclear localization region spans residues 126–138 (KRRKKRQKLKEKK). Positions 126–143 (KRRKKRQKLKEKKLLAKK) are enriched in basic residues. The span at 153-162 (EASSETQEQP) shows a compositional bias: polar residues. Residues 170 to 179 (SGTEDEEEDA) are compositionally biased toward acidic residues.

The protein belongs to the PRKRIP1 family. In terms of assembly, component of the pre-catalytic and post-catalytic spliceosome complexes. Interacts with EIF2AK2.

It is found in the nucleus. Its subcellular location is the nucleolus. Required for pre-mRNA splicing as component of the spliceosome. Binds double-stranded RNA. Inhibits EIF2AK2 kinase activity. This chain is PRKR-interacting protein 1 (PRKRIP1), found in Bos taurus (Bovine).